The primary structure comprises 325 residues: D-alanine--D-alanine ligase (325 aa).

Positions 102 to 300 (KQIFRAAGIP…FTELVERMLQ (199 aa)) constitute an ATP-grasp domain. Residue 130–185 (AAELGSPLVIKPSNNGSTVGISIVRDERSFAQGLELARSVSSRIFLERYVPGKEIT) participates in ATP binding. 3 residues coordinate Mg(2+): aspartate 254, glutamate 267, and asparagine 269.

It belongs to the D-alanine--D-alanine ligase family. The cofactor is Mg(2+). It depends on Mn(2+) as a cofactor.

The protein localises to the cytoplasm. It catalyses the reaction 2 D-alanine + ATP = D-alanyl-D-alanine + ADP + phosphate + H(+). The protein operates within cell wall biogenesis; peptidoglycan biosynthesis. Its function is as follows. Cell wall formation. The chain is D-alanine--D-alanine ligase from Synechococcus sp. (strain JA-2-3B'a(2-13)) (Cyanobacteria bacterium Yellowstone B-Prime).